A 134-amino-acid polypeptide reads, in one-letter code: ATP synthase epsilon chain (134 aa).

The protein belongs to the ATPase epsilon chain family. In terms of assembly, F-type ATPases have 2 components, CF(1) - the catalytic core - and CF(0) - the membrane proton channel. CF(1) has five subunits: alpha(3), beta(3), gamma(1), delta(1), epsilon(1). CF(0) has three main subunits: a, b and c.

Its subcellular location is the cell inner membrane. In terms of biological role, produces ATP from ADP in the presence of a proton gradient across the membrane. In Syntrophobacter fumaroxidans (strain DSM 10017 / MPOB), this protein is ATP synthase epsilon chain.